Reading from the N-terminus, the 143-residue chain is MAKKITGYIKLQVPAGKANPSPPIGPALGQRGLNIMEFCKAFNARTQGLEPGLPIPVVITAFADKSFTFIMKTPPATILIKKAAKITKGSPKPHTDKVGSITRAQVEEIAKTKMADLTAADMEAAVRTIAGSARSMGITVEGL.

Belongs to the universal ribosomal protein uL11 family. As to quaternary structure, part of the ribosomal stalk of the 50S ribosomal subunit. Interacts with L10 and the large rRNA to form the base of the stalk. L10 forms an elongated spine to which L12 dimers bind in a sequential fashion forming a multimeric L10(L12)X complex. In terms of processing, one or more lysine residues are methylated.

Forms part of the ribosomal stalk which helps the ribosome interact with GTP-bound translation factors. This chain is Large ribosomal subunit protein uL11, found in Aromatoleum aromaticum (strain DSM 19018 / LMG 30748 / EbN1) (Azoarcus sp. (strain EbN1)).